The following is a 128-amino-acid chain: Small nuclear ribonucleoprotein associated homolog 13 (128 aa).

This sequence belongs to the eukaryotic ribosomal protein eL8 family.

The protein resides in the nucleus. It is found in the nucleolus. Functionally, binds to the 5'-stem-loop of U4 snRNA and may play a role in the late stage of spliceosome assembly. The protein undergoes a conformational change upon RNA-binding. In Caenorhabditis elegans, this protein is Small nuclear ribonucleoprotein associated homolog 13.